The primary structure comprises 664 residues: Acetolactate synthase 2, chloroplastic (664 aa).

The segment covering 1–34 has biased composition (low complexity); that stretch reads MAAAAAAPSPSFSKTLSSSSSKSSTLLPRSTFPF. Residues 1–51 are disordered; sequence MAAAAAAPSPSFSKTLSSSSSKSSTLLPRSTFPFPHHPHKTTPPPLHLTPT. Residues 1 to 91 constitute a chloroplast transit peptide; it reads MAAAAAAPSP…VSRFAPDEPR (91 aa). E138 provides a ligand contact to thiamine diphosphate. C158 and C304 are joined by a disulfide. FAD is bound by residues R240, 346-367, and 389-408; these read HGTVYANYAVDSSDLLLAFGVR and DIDSAEIGKNKQPHVSICAD. The tract at residues 481-561 is thiamine pyrophosphate binding; the sequence is QHQMWAAQYY…VKIMLLNNQH (81 aa). The Mg(2+) site is built by D532 and N559.

It belongs to the TPP enzyme family. It depends on Mg(2+) as a cofactor. Thiamine diphosphate serves as cofactor.

The protein resides in the plastid. It localises to the chloroplast. It carries out the reaction 2 pyruvate + H(+) = (2S)-2-acetolactate + CO2. It participates in amino-acid biosynthesis; L-isoleucine biosynthesis; L-isoleucine from 2-oxobutanoate: step 1/4. It functions in the pathway amino-acid biosynthesis; L-valine biosynthesis; L-valine from pyruvate: step 1/4. This Nicotiana tabacum (Common tobacco) protein is Acetolactate synthase 2, chloroplastic (ALS SURB).